The primary structure comprises 247 residues: ATP synthase subunit a, chloroplastic (247 aa).

5 helical membrane passes run Gln38–Val58, Val95–Leu115, Ile134–Thr154, Leu199–Leu219, and Gly220–Gly240.

It belongs to the ATPase A chain family. F-type ATPases have 2 components, CF(1) - the catalytic core - and CF(0) - the membrane proton channel. CF(1) has five subunits: alpha(3), beta(3), gamma(1), delta(1), epsilon(1). CF(0) has four main subunits: a, b, b' and c.

It localises to the plastid. It is found in the chloroplast thylakoid membrane. Functionally, key component of the proton channel; it plays a direct role in the translocation of protons across the membrane. This chain is ATP synthase subunit a, chloroplastic, found in Ceratophyllum demersum (Rigid hornwort).